The following is an 843-amino-acid chain: Protein P (843 aa).

A terminal protein domain (TP) region spans residues 1 to 177 (MPLSYQHFRR…FCGSPYSWEQ (177 aa)). Positions 178-346 (ELQHGSTSLN…YCLSHIINLL (169 aa)) are spacer. Disordered stretches follow at residues 180 to 202 (QHGSTSLNGEKGHGTEPFCAQSS) and 226 to 315 (QHKQ…VGSE). Residues 239-249 (RSGRLRSRVHT) are compositionally biased toward basic residues. Polar residues-rich tracts occupy residues 262-277 (TGHSDNLATRSTSCFH) and 287-299 (PSLSTSKGHTSTG). The polymerase/reverse transcriptase domain (RT) stretch occupies residues 347 to 690 (EDWGPCYEHG…YMNLYPVARQ (344 aa)). Positions 357–600 (EHHIRTPKTP…YSLHFMGYII (244 aa)) constitute a Reverse transcriptase domain. The Mg(2+) site is built by aspartate 429, aspartate 551, and aspartate 552.

It belongs to the hepadnaviridae P protein family.

The enzyme catalyses DNA(n) + a 2'-deoxyribonucleoside 5'-triphosphate = DNA(n+1) + diphosphate. It carries out the reaction Endonucleolytic cleavage to 5'-phosphomonoester.. Its activity is regulated as follows. Activated by host HSP70 and HSP40 in vitro to be able to bind the epsilon loop of the pgRNA. Because deletion of the RNase H region renders the protein partly chaperone-independent, the chaperones may be needed indirectly to relieve occlusion of the RNA-binding site by this domain. Inhibited by several reverse-transcriptase inhibitors: Lamivudine, Adefovir and Entecavir. Functionally, multifunctional enzyme that converts the viral RNA genome into dsDNA in viral cytoplasmic capsids. This enzyme displays a DNA polymerase activity that can copy either DNA or RNA templates, and a ribonuclease H (RNase H) activity that cleaves the RNA strand of RNA-DNA heteroduplexes in a partially processive 3'- to 5'-endonucleasic mode. Neo-synthesized pregenomic RNA (pgRNA) are encapsidated together with the P protein, and reverse-transcribed inside the nucleocapsid. Initiation of reverse-transcription occurs first by binding the epsilon loop on the pgRNA genome, and is initiated by protein priming, thereby the 5'-end of (-)DNA is covalently linked to P protein. Partial (+)DNA is synthesized from the (-)DNA template and generates the relaxed circular DNA (RC-DNA) genome. After budding and infection, the RC-DNA migrates in the nucleus, and is converted into a plasmid-like covalently closed circular DNA (cccDNA). The activity of P protein does not seem to be necessary for cccDNA generation, and is presumably released from (+)DNA by host nuclear DNA repair machinery. This chain is Protein P, found in Hepatitis B virus genotype H (isolate United States/LAS2523/2002) (HBV-H).